The chain runs to 198 residues: Ribosomal RNA small subunit methyltransferase G (198 aa).

S-adenosyl-L-methionine-binding positions include Gly-74, Phe-79, Ile-123–Gln-124, and Arg-136.

This sequence belongs to the methyltransferase superfamily. RNA methyltransferase RsmG family.

It localises to the cytoplasm. The catalysed reaction is guanosine(527) in 16S rRNA + S-adenosyl-L-methionine = N(7)-methylguanosine(527) in 16S rRNA + S-adenosyl-L-homocysteine. Specifically methylates the N7 position of guanine in position 527 of 16S rRNA. The protein is Ribosomal RNA small subunit methyltransferase G of Orientia tsutsugamushi (strain Boryong) (Rickettsia tsutsugamushi).